Reading from the N-terminus, the 577-residue chain is Outer spore wall assembly protein SHE10 (577 aa).

Residues 1 to 23 form the signal peptide; the sequence is MGKLIKLITTLTVLVSLLQYCCE. Coiled coils occupy residues 379 to 416 and 513 to 561; these read NETRSTLDELTNAMEKDLSEITDEIEKKVNAIREENVE and ILRS…EEDV. Residues 525-545 are compositionally biased toward basic and acidic residues; sequence RERKERERKEREKAAAEEFQR. The tract at residues 525 to 577 is disordered; it reads RERKERERKEREKAAAEEFQRQQELLLQQEEEDEEDVSYTSTSTITTTTTMTL. Residues 562-577 show a composition bias toward low complexity; the sequence is SYTSTSTITTTTTMTL.

It belongs to the SHE10 family. As to quaternary structure, component of the mitochondria-localized RNase mitochondrial RNA-processing (RNase MRP) composed of one single RNA encoded by the NME1 gene and at least 31 proteins. Absent in the nucleus-localized RNase MRP (NuMRP).

It is found in the mitochondrion. Its function is as follows. Involved in spore wall assembly. May be a component of the mitochondrial RNase MRP (MtMRP), a ribonucleoprotein endoribonuclease involved in the cleaving RNA transcripts to generate primers for DNA replication in mitochondria. This Saccharomyces cerevisiae (strain RM11-1a) (Baker's yeast) protein is Outer spore wall assembly protein SHE10.